A 1347-amino-acid polypeptide reads, in one-letter code: Protocadherin-11 X-linked (1347 aa).

Residues 1 to 23 (MDLLSGTYIFAVLLACVVFHSGA) form the signal peptide. Topologically, residues 24 to 812 (QEKNYTIREE…VSSPTSDYVK (789 aa)) are extracellular. 7 Cadherin domains span residues 26-139 (KNYT…APLF), 140-249 (PATV…HPVF), 250-355 (KETE…VPSI), 362-466 (NPVN…APVF), 467-570 (TQSF…SPVF), 571-673 (THNE…KPVF), and 677-795 (PSNC…APVT). N-linked (GlcNAc...) asparagine glycans are attached at residues N27, N48, and N54. N344 carries N-linked (GlcNAc...) asparagine glycosylation. The N-linked (GlcNAc...) asparagine glycan is linked to N553. A glycan (N-linked (GlcNAc...) asparagine) is linked at N773. A helical transmembrane segment spans residues 813 to 833 (ILVAAVAGTITVVVVIFITAV). Over 834–1347 (VRCRQAPHLK…DSPIMEEHPL (514 aa)) the chain is Cytoplasmic. Disordered regions lie at residues 1057 to 1091 (LPEGSQESSSDGGLGDHDAGSLTSTSHGLPLGYPQ), 1097 to 1116 (RATPSNRTEGDGNSDPESTF), and 1326 to 1347 (FTPRQQARPSRGDSPIMEEHPL).

Expressed strongly in fetal brain and brain (cortex, amygdala, thalamus, substantia nigra, hippocampus, caudate nucleus and corpus callosum). Expressed at low level in testis.

It is found in the cell membrane. Its function is as follows. Potential calcium-dependent cell-adhesion protein. This Homo sapiens (Human) protein is Protocadherin-11 X-linked (PCDH11X).